A 284-amino-acid chain; its full sequence is Tropomyosin Per a 7.0101 (284 aa).

Residues 22 to 266 are a coiled coil; sequence ALLCEQQARD…EDELVHEKEK (245 aa).

It belongs to the tropomyosin family. In terms of assembly, homodimer.

In terms of biological role, tropomyosin, in association with the troponin complex, plays a central role in the calcium dependent regulation of muscle contraction. The polypeptide is Tropomyosin Per a 7.0101 (Periplaneta americana (American cockroach)).